The primary structure comprises 504 residues: MYTLLDILKGLPLLAVAAIASADYPTIPSDLTTPVQQRLAISGMNSVSVGWNTYEKLLKPCVQYGTSSTDLSQETCSLISTTYNTSRTWSNTVILTDLTPATTYYYQIVSTNSTVNSFFSPRTPGDKSPFTTSVVIDLGVYGADGFTVDADGDPTRKVLIPEVEPALNHTTIGRLADTWDDYEWVLHPGDFGYADDWYLTPTNVGDGVNAYEAILENFYDQLAPIAGGKVYMASPGNHEADCEELGTPAIELSCPEGQKNFTDFNVRFGKNMPTSFSSTSSNTKAKVNANKAAALANPPFWYSFEYGMVHVTMIDTETDFPNAPDAPFGTAGLDGGPFGYTGQQLDFFEADLASVDRTVTPWLLVAGHRPWYSTGGQSNICSACKTAFEPLMYQYGVDLGVFGHVHNSQRFAPVNNSVVDPAGMDNPTAPMYIIAGGAGNIEGLSSVGNNISSNRFAYAETFSYATLTFEDENNLSIQFIESATGDILDSSTLYKAHTEQFVNQ.

A signal peptide spans 1–22 (MYTLLDILKGLPLLAVAAIASA). Asn84, Asn112, Asn168, Asn260, Asn415, Asn450, and Asn474 each carry an N-linked (GlcNAc...) asparagine glycan.

It belongs to the metallophosphoesterase superfamily. Purple acid phosphatase family. As to quaternary structure, monomer.

Its subcellular location is the secreted. It carries out the reaction a phosphate monoester + H2O = an alcohol + phosphate. Acid phosphatase involved in the regulation of fungal phenotypic traits and virulence in C.parasitica. The chain is Acid phosphatase A from Cryphonectria parasitica (strain ATCC 38755 / EP155).